A 311-amino-acid polypeptide reads, in one-letter code: 3'(2'),5'-bisphosphate nucleotidase 1 (311 aa).

Residue Asp-49 is the Proton acceptor of the active site. Mg(2+) is bound by residues Glu-72, Asp-116, Leu-118, and Asp-119. The active-site Proton acceptor is Thr-121. Positions 202, 205, 227, and 231 each coordinate AMP. Asp-254 provides a ligand contact to Mg(2+).

It belongs to the inositol monophosphatase superfamily. Requires Mg(2+) as cofactor.

It catalyses the reaction adenosine 3',5'-bisphosphate + H2O = AMP + phosphate. The enzyme catalyses adenosine 2',5'-bisphosphate + H2O = AMP + phosphate. The catalysed reaction is 3'-phosphoadenylyl sulfate + H2O = adenosine 5'-phosphosulfate + phosphate. It carries out the reaction 1D-myo-inositol 1,4-bisphosphate + H2O = 1D-myo-inositol 4-phosphate + phosphate. It catalyses the reaction 1D-myo-inositol 1,3,4-trisphosphate + H2O = 1D-myo-inositol 3,4-bisphosphate + phosphate. Inhibited by Li(+) and Ca(2+), but not by Na(+). In terms of biological role, phosphatase that converts 3'(2')-phosphoadenosine 5'-phosphate (PAP) to AMP and adenosine 3'-phosphate 5'-phosphosulfate (PAPS) to adenosine 5'-phosphosulfate (APS). Is also able to hydrolyze inositol 1,4-bisphosphate (Ins(1,4)P2) and inositol 1,3,4-trisphosphate (Ins(1,3,4)P3), but is not active on AMP, 3'-AMP, fructose-1,6-bisphosphate, Ins(1)P, Ins(2)P and Ins(1,4,5)P3. Probably prevents the toxic accumulation of PAP, a compound which inhibits a variety of proteins, including PAPS-utilizing enzymes such as sulfotransferases, and RNA processing enzymes. Could also play a role in inositol recycling and phosphoinositide metabolism. The polypeptide is 3'(2'),5'-bisphosphate nucleotidase 1 (bpnt1) (Dictyostelium discoideum (Social amoeba)).